The primary structure comprises 901 residues: HTH-type transcriptional regulator MalT (901 aa).

39–46 (SPAGYGKT) contributes to the ATP binding site. Residues 829–894 (ELIRTSPLTQ…DAVQHAQQLL (66 aa)) form the HTH luxR-type domain. A DNA-binding region (H-T-H motif) is located at residues 853 to 872 (NEQIAGELEVAATTIKTHIR).

It belongs to the MalT family. As to quaternary structure, monomer in solution. Oligomerizes to an active state in the presence of the positive effectors ATP and maltotriose.

With respect to regulation, activated by ATP and maltotriose, which are both required for DNA binding. Its function is as follows. Positively regulates the transcription of the maltose regulon whose gene products are responsible for uptake and catabolism of malto-oligosaccharides. Specifically binds to the promoter region of its target genes, recognizing a short DNA motif called the MalT box. This Escherichia coli (strain K12 / MC4100 / BW2952) protein is HTH-type transcriptional regulator MalT.